Reading from the N-terminus, the 113-residue chain is uncharacterized protein (113 aa).

This is an uncharacterized protein from Acanthamoeba polyphaga mimivirus (APMV).